The following is a 495-amino-acid chain: Neuronal acetylcholine receptor subunit alpha-3 (495 aa).

An N-terminal signal peptide occupies residues 1–21 (MARRSRLRRLLLLLLLPVAST). At 22-240 (SDAEHRLFER…PLFYTINLII (219 aa)) the chain is on the extracellular side. N-linked (GlcNAc...) asparagine glycans are attached at residues Asn-45 and Asn-162. Intrachain disulfides connect Cys-149–Cys-163 and Cys-213–Cys-214. Residues 241–256 (PCLLISFLTVLVFYLP) traverse the membrane as a helical segment. Residues 257–258 (SD) lie on the Cytoplasmic side of the membrane. Residues 259–275 (CGEKVTLCISVLLSLTV) form a helical membrane-spanning segment. Residue Glu-261 participates in Na(+) binding. The Extracellular segment spans residues 276–297 (FLLVITETIPSTSLVIPLIGEY). Residues 298-316 (LLFTMIFVTLSIVITVFVL) traverse the membrane as a helical segment. The Cytoplasmic segment spans residues 317–464 (NVHYRTPTTH…QDDWKYVAMV (148 aa)). Ser-403 and Ser-406 each carry phosphoserine. The chain crosses the membrane as a helical span at residues 465 to 483 (IDRIFLWVFILVCILGTAG). At 484–495 (LFLQPLMTRDDA) the chain is on the extracellular side.

The protein belongs to the ligand-gated ion channel (TC 1.A.9) family. Acetylcholine receptor (TC 1.A.9.1) subfamily. Alpha-3/CHRNA3 sub-subfamily. As to quaternary structure, neuronal AChR is composed of two different types of subunits: alpha and beta. CHRNA3/Alpha-3 subunit can be combined to CHRNB2/beta-2 or CHRNB4/beta-4 to give rise to functional receptors. Part of a complex composed of STUB1/CHIP, VCP/p97, CHRNA3, and UBXN2A that modulates the ubiquitination and endoplasmic reticulum-associated degradation (ERAD) of CHRNA3. Within the complex UBXN2A acts as a scaffold protein required for the interaction of CHRNA3 with VCP/p97, this interaction also inhibits CHRNA3 ubiquitination by STUB1/CHIP and subsequently ERAD. Interacts with UBXN2A (via SEP domain), the interaction is required for the interaction of CHRNA3 in the STUB1:VCP:UBXN2A complex. Interacts with RIC3; which is required for proper folding and assembly. Interacts with LYPD6. In terms of processing, ubiquitinated; by STUB1/CHIP and thereafter degraded by the 26S proteosome complex.

It localises to the synaptic cell membrane. It is found in the cell membrane. The protein resides in the endoplasmic reticulum. The protein localises to the golgi apparatus. The catalysed reaction is K(+)(in) = K(+)(out). It catalyses the reaction Na(+)(in) = Na(+)(out). The enzyme catalyses Ca(2+)(in) = Ca(2+)(out). Activated by a myriad of ligands such as acetylcholine, cytisine, nicotine, choline and epibatidine. The heteropentamer CHRNA3:CHRNB2 activity is blocked by alpha-conotoxins ImI, ImII, PnIA, GID and MII. The heteropentamer CHRNA3:CHRNB4 activity is blocked by the alpha-conotoxin ImI and AuIB. Component of neuronal acetylcholine receptors (nAChRs) that function as pentameric, ligand-gated cation channels with high calcium permeability among other activities. nAChRs are excitatory neurotrasnmitter receptors formed by a collection of nAChR subunits known to mediate synaptic transmission in the nervous system and the neuromuscular junction. Each nAchR subunit confers differential attributes to channel properties, including activation, deactivation and desensitization kinetics, pH sensitivity, cation permeability, and binding to allosteric modulators. CHRNA3 forms heteropentameric neuronal acetylcholine receptors with CHRNB2 and CHRNB4. CHRNA3:CHRNB4 being predominant in neurons of the autonomic ganglia, it is known as ganglionic nicotinic receptor. CHRNA3:CHRNB4 also plays an important role in the habenulo-interpeduncular tract, modulating the mesolimbic dopamine system and affecting reward circuits and addiction. Hypothalamic CHRNA3:CHRNB4 nAChR activation by nicotine leads to activation of POMC neurons and a decrease in food intake. Also expressed in the urothelium where it modulates reflex bladder activity by increasing intracellular calcium through extracellular influx and basal ATP release. The chain is Neuronal acetylcholine receptor subunit alpha-3 (CHRNA3) from Bos taurus (Bovine).